The following is a 1189-amino-acid chain: Disabled homolog 2-interacting protein (1189 aa).

The disordered stretch occupies residues 1–75; it reads MSAGGNARKS…EPSASTPFRV (75 aa). The span at 20 to 38 shows a compositional bias: basic residues; the sequence is LLRRPRLQRQRSRSRSRTR. A compositionally biased stretch (basic and acidic residues) spans 39–49; that stretch reads PARESPQERPG. Residues 59–73 show a composition bias toward polar residues; that stretch reads SEKNPSMEPSASTPF. The 102-residue stretch at 101-202 folds into the PH domain; that stretch reads SFRHILPGFR…WMENLRRAVH (102 aa). Residues 193–311 enclose the C2 domain; that stretch reads WMENLRRAVH…AGRQFVEKWY (119 aa). The Ras-GAP domain maps to 387–595; it reads GKVKDFLTDL…TNMQRFLLEI (209 aa). The necessary for interaction with AKT1 stretch occupies residues 646 to 943; that stretch reads LRDVHTALST…RTPPTLLSTL (298 aa). Over residues 653–668 the composition is skewed to polar residues; sequence LSTPGSGQLPGTNDLA. Disordered stretches follow at residues 653–679 and 715–738; these read LSTP…SSVS and RSSG…PDLQ. Residues 669 to 679 are compositionally biased toward low complexity; the sequence is STPGSGSSSVS. Residues 715–731 are compositionally biased toward polar residues; sequence RSSGVQPSPARSSSYSE. Residue serine 728 is modified to Phosphoserine; by MAP3K5 and RIPK1. Serine 747 is modified (phosphoserine). Disordered regions lie at residues 804–823, 843–865, 895–998, 1015–1034, and 1163–1189; these read VPTP…PQLL, PRGL…NSEE, SLTE…SPNA, EDEG…SKEE, and ARNG…SSNC. Residues 852 to 865 show a composition bias toward low complexity; the sequence is EGHSSLSSHSNSEE. Pro residues predominate over residues 919–931; the sequence is QPPPPPPPPPPAP. 2 stretches are compositionally biased toward polar residues: residues 939–955 and 967–976; these read LLST…TLAS and LRQQSSSSKG. Serine 978 and serine 995 each carry phosphoserine. A compositionally biased stretch (basic and acidic residues) spans 1023-1034; sequence PPHRDRLRSKEE. Residues 1025 to 1159 are a coiled coil; the sequence is HRDRLRSKEE…SALTQLKERY (135 aa).

As to quaternary structure, on plasma membrane, exists in an inactive form complexed with TNFR1; in response to TNF-alpha, dissociates from TNFR1 complex, translocates to cytoplasm and forms part of an intracellular signaling complex comprising TRADD, RIPK1, TRAF2 and MAP3K5. Interacts with DAB1. Part of a cytoplasmic complex made of HIPK1, DAB2IP and MAP3K5 in response to TNF-alpha; this complex formation promotes MAP3K5-JNK activation and subsequent apoptosis. Interacts (via N-terminal domain) with JAK2; the interaction occurs in a IFNG/IFN-gamma-dependent manner and inhibits JAK2 autophosphorylation activity. Interacts (via C2 domain) with GSK3B; the interaction stimulates GSK3B kinase activation. Interacts (via C2 domain) with PPP2CA. Interacts (via proline-rich motif) with a regulatory p85 subunit (via SH3 domain) of the PI3K complex; the interaction inhibits the PI3K-AKT complex activity in a TNF-alpha-dependent manner in prostate cancer (PCa) cells. Interacts with AKT1; the interaction is increased in a TNF-alpha-induced manner. Interacts (via C2 domain and active form preferentially) with KDR/VEGFR2 (tyrosine-phosphorylated active form preferentially); the interaction occurs at the late phase of VEGFA response and inhibits KDR/VEGFR2 activity. Interacts (via N-terminus C2 domain) with MAP3K5 ('Ser-966' dephosphorylated form preferentially); the interaction occurs in a TNF-alpha-induced manner. Interacts (via Ras-GAP domain) with the catalytic subunit of protein phosphatase PP2A; the interaction occurs in resting endothelial cells, is further enhanced by TNF-alpha stimulation and is required to bridge PP2A to MAP3K5. Interacts (via C-terminus PER domain) with TRAF2 (via zinc fingers); the interaction occurs in a TNF-alpha-dependent manner. Interacts with 14-3-3 proteins; the interaction occurs in a TNF-alpha-dependent manner. Interacts (via Ras-GAP domain) with RIPK1 (via kinase domain); the interaction occurs in a TNF-alpha-dependent manner. Interacts (via PH domain) with ERN1. Interacts with TRAF2. Interacts (via NPXY motif) with DAB2 (via PID domain). Interacts with RAB40C; acts as a GAP for RAB40C. In response to TNF-alpha-induction, phosphorylated at Ser-728; phosphorylation leads to a conformational change, and thus, increases its association with 14-3-3 proteins, MAP3K5, RIPK1 and TRAF2 in endothelial cells; also stimulates regulatory p85 subunit sequestring and PI3K-p85 complex activity inhibition. In terms of tissue distribution, expressed in vascular endothelium of muscle and aorta, in smooth muscle cells of aorta and epithelial cells of lung. Expressed throughout the brain, including olfactory bulb, hypothalamus, cerebellum and cerebral cortex. Expressed in the soma and processes of neurons in a variety of brain structures, including the developing cerebral cortex, CA1 pyramidal neurons and Purkinje cells. Poorly expressed in medulloblastoma cells compared to cerebellar precursor proliferating progenitor cells (at protein level). Highly expressed in the brain, salivary gland, and testis; moderate expression in kidney and heart. Low expression in the lung, seminal vesicle, ventral prostate, epididymis, liver, and bladder. Very low expression in the coagulation gland and skeleton muscles. Lowest expression seen in spleen.

The protein resides in the cytoplasm. The protein localises to the cell membrane. Its subcellular location is the membrane. It localises to the cell projection. It is found in the dendrite. Its function is as follows. Functions as a scaffold protein implicated in the regulation of a large spectrum of both general and specialized signaling pathways. Involved in several processes such as innate immune response, inflammation and cell growth inhibition, apoptosis, cell survival, angiogenesis, cell migration and maturation. Also plays a role in cell cycle checkpoint control; reduces G1 phase cyclin levels resulting in G0/G1 cell cycle arrest. Mediates signal transduction by receptor-mediated inflammatory signals, such as the tumor necrosis factor (TNF), interferon (IFN) or lipopolysaccharide (LPS). Modulates the balance between phosphatidylinositol 3-kinase (PI3K)-AKT-mediated cell survival and apoptosis stimulated kinase (MAP3K5)-JNK signaling pathways; sequesters both AKT1 and MAP3K5 and counterbalances the activity of each kinase by modulating their phosphorylation status in response to pro-inflammatory stimuli. Acts as a regulator of the endoplasmic reticulum (ER) unfolded protein response (UPR) pathway; specifically involved in transduction of the ER stress-response to the JNK cascade through ERN1. Mediates TNF-alpha-induced apoptosis activation by facilitating dissociation of inhibitor 14-3-3 from MAP3K5; recruits the PP2A phosphatase complex which dephosphorylates MAP3K5 on 'Ser-966', leading to the dissociation of 13-3-3 proteins and activation of the MAP3K5-JNK signaling pathway in endothelial cells. Also mediates TNF/TRAF2-induced MAP3K5-JNK activation, while it inhibits CHUK-NF-kappa-B signaling. Acts a negative regulator in the IFN-gamma-mediated JAK-STAT signaling cascade by inhibiting smooth muscle cell (VSMCs) proliferation and intimal expansion, and thus, prevents graft arteriosclerosis (GA). Acts as a GTPase-activating protein (GAP) for the ADP ribosylation factor 6 (ARF6) and Ras. Promotes hydrolysis of the ARF6-bound GTP and thus, negatively regulates phosphatidylinositol 4,5-bisphosphate (PIP2)-dependent TLR4-TIRAP-MyD88 and NF-kappa-B signaling pathways in endothelial cells in response to lipopolysaccharides (LPS). Binds specifically to phosphatidylinositol 4-phosphate (PtdIns4P) and phosphatidylinositol 3-phosphate (PtdIns3P). In response to vascular endothelial growth factor (VEGFA), acts as a negative regulator of the VEGFR2-PI3K-mediated angiogenic signaling pathway by inhibiting endothelial cell migration and tube formation. In the developing brain, promotes both the transition from the multipolar to the bipolar stage and the radial migration of cortical neurons from the ventricular zone toward the superficial layer of the neocortex in a glial-dependent locomotion process. Probable downstream effector of the Reelin signaling pathway; promotes Purkinje cell (PC) dendrites development and formation of cerebellar synapses. Also functions as a tumor suppressor protein in prostate cancer progression; prevents cell proliferation and epithelial-to-mesenchymal transition (EMT) through activation of the glycogen synthase kinase-3 beta (GSK3B)-induced beta-catenin and inhibition of PI3K-AKT and Ras-MAPK survival downstream signaling cascades, respectively. The sequence is that of Disabled homolog 2-interacting protein (Dab2ip) from Mus musculus (Mouse).